A 503-amino-acid chain; its full sequence is Excitatory amino acid transporter (503 aa).

The Cytoplasmic portion of the chain corresponds to 1-18; the sequence is MPPDTRINKEIMVSWIRK. The next 3 helical transmembrane spans lie at 19-39, 59-79, and 96-116; these read NLLL…GFLL, LMHM…ISGL, and TYYM…VLVI. Over 117 to 198 the chain is Extracellular; it reads HPGDPTIKKE…SLDYVKASVE (82 aa). 2 N-linked (GlcNAc...) asparagine glycosylation sites follow: N177 and N187. A run of 5 helical transmembrane segments spans residues 199 to 219, 239 to 259, 281 to 301, 369 to 389, and 400 to 420; these read YTSG…GISL, VIMK…FCLI, VTVL…IFFV, AVAA…GQVV, and IGAA…LTAV.

Belongs to the dicarboxylate/amino acid:cation symporter (DAACS) (TC 2.A.23) family.

It localises to the membrane. Its function is as follows. Transports L-glutamate and also L- and D-aspartate. Essential for terminating the postsynaptic action of glutamate by rapidly removing released glutamate from the synaptic cleft. Acts as a symport by cotransporting sodium. This is Excitatory amino acid transporter (glt-1) from Caenorhabditis elegans.